Consider the following 458-residue polypeptide: MALWGGRFKQEADAKFKFFNDSLRFDYRLALQDIDGSIGWAKAITSVGILTEQEHQQLVVALKELRAEIEPNIAIILRDDAEDIHSWVESKLIEKVGDLGKKLHTGRSRNDQVAVDMKMWCKVQAVVLQERIRNLQHKLVETAEANQNAVMPGYTHLQRAQPITFAHWCMAYYEMLERDFSRLSDAYKRMHTCPLGSGALAGTAYSIDRDALAQDLGFSIGTRNSLDSVSDRDHVLELLSTASISMVHLSRFAEDLIFFNSGESAFLELSDRVTSGSSLMPQKKNPDACELIRGKSGRVFGALSGLLTTLKGLPLAYNKDMQEDKEGIFDAMETWQACLEIGALVLEDINVNVERTREAAQQGYSNATELADYLVAKGIPFREAHHIVGEAVVYAISKREPLEALSVAEFKQFHPVIDEDVYPILSLESCLEKRSAKGGVNPERVREAIEAAKVNLGA.

This sequence belongs to the lyase 1 family. Argininosuccinate lyase subfamily.

Its subcellular location is the cytoplasm. It catalyses the reaction 2-(N(omega)-L-arginino)succinate = fumarate + L-arginine. It participates in amino-acid biosynthesis; L-arginine biosynthesis; L-arginine from L-ornithine and carbamoyl phosphate: step 3/3. The chain is Argininosuccinate lyase from Actinobacillus pleuropneumoniae serotype 7 (strain AP76).